The sequence spans 122 residues: uncharacterized protein (122 aa).

Transmembrane regions (helical) follow at residues 21–40 (VWSW…SIAI), 57–77 (YTHM…CICI), and 94–114 (LLFS…YCIY).

The protein localises to the membrane. This is an uncharacterized protein from Saccharomyces cerevisiae (strain ATCC 204508 / S288c) (Baker's yeast).